The chain runs to 79 residues: Acyl carrier protein (79 aa).

In terms of domain architecture, Carrier spans 2–77; sequence SEIGERVKKI…DATKFLEKNA (76 aa). At S37 the chain carries O-(pantetheine 4'-phosphoryl)serine.

This sequence belongs to the acyl carrier protein (ACP) family. 4'-phosphopantetheine is transferred from CoA to a specific serine of apo-ACP by AcpS. This modification is essential for activity because fatty acids are bound in thioester linkage to the sulfhydryl of the prosthetic group.

It is found in the cytoplasm. It participates in lipid metabolism; fatty acid biosynthesis. Carrier of the growing fatty acid chain in fatty acid biosynthesis. The polypeptide is Acyl carrier protein (Afipia carboxidovorans (strain ATCC 49405 / DSM 1227 / KCTC 32145 / OM5) (Oligotropha carboxidovorans)).